Consider the following 506-residue polypeptide: MNSQITLFFFFFSILSLSQISNSSSLLKPHPCPILPLPSSQQLQWQLGSMAMFLHFGPNTFTDSEWGTGKANPSIFNPTHLNASQWVQIAKDSGFSRVILTAKHHDGFCLWPSEYTDYSVKSSQWRNGAGDVVAELASAAKEAGIGLGLYLSPWDRHEQCYGKTLEYNEFYLSQMTELLTKYGEIKEVWLDGAKGDGEKDMEYFFDTWFSLIHQLQPKAVIFSDAGPDVRWIGDEAGLAGSTCWSLFNRTNAKIGDTEPSYSQEGDGYGQDWVPAECDVSIRPGWFWHASESPKPAVQLLDIYYNSVGRNCLFLLNVPPNSSGLISEQDIKVLEEFSEMKNSIFSNNLARKAFVNSSSIRGDQSSQFGPKNVLEEGLDKYWAPEENQNEWVLYLEFKDLVSFNVLEIREPIHMGQRIASFHLETRKTGSGEWERVVSGTTVGNKRLLRFLNVVESRSLKLVVDKARTDPLISYLGLYMDKFSGSSRNTTKITITRTLKEEQQLHDL.

The N-terminal stretch at 1 to 23 is a signal peptide; sequence MNSQITLFFFFFSILSLSQISNS. Asparagine 22, asparagine 82, asparagine 248, asparagine 320, asparagine 355, and asparagine 487 each carry an N-linked (GlcNAc...) asparagine glycan.

Belongs to the glycosyl hydrolase 29 family.

Its subcellular location is the secreted. The protein resides in the extracellular space. It is found in the apoplast. It carries out the reaction an alpha-L-fucoside + H2O = L-fucose + an alcohol. Hydrolyzes both 3- and 4-linked fucoses in Lewis determinants. Not active on neither 2-linked fucose nor on fucose in alpha-1,3-linkage to the innermost GlcNAc. In Arabidopsis thaliana (Mouse-ear cress), this protein is Alpha-L-fucosidase 1 (FUC1).